We begin with the raw amino-acid sequence, 106 residues long: Urease subunit beta (106 aa).

The protein belongs to the urease beta subunit family. Heterotrimer of UreA (gamma), UreB (beta) and UreC (alpha) subunits. Three heterotrimers associate to form the active enzyme.

It is found in the cytoplasm. The enzyme catalyses urea + 2 H2O + H(+) = hydrogencarbonate + 2 NH4(+). The protein operates within nitrogen metabolism; urea degradation; CO(2) and NH(3) from urea (urease route): step 1/1. This chain is Urease subunit beta, found in Prochlorococcus marinus (strain AS9601).